The primary structure comprises 636 residues: Chaperone protein HtpG (636 aa).

An a; substrate-binding region spans residues 1 to 349 (MAKHQFQTEV…SEDLPLNVSR (349 aa)). Residues 350–562 (EILQENRILA…ADAQMAAMAH (213 aa)) are b. Residues 563-636 (MFRAMGQAMP…RLSRITAKAL (74 aa)) form a c region.

This sequence belongs to the heat shock protein 90 family. Homodimer.

Its subcellular location is the cytoplasm. Its function is as follows. Molecular chaperone. Has ATPase activity. This chain is Chaperone protein HtpG, found in Aliarcobacter butzleri (strain RM4018) (Arcobacter butzleri).